The following is a 548-amino-acid chain: Chaperonin GroEL 2 (548 aa).

ATP contacts are provided by residues 30 to 33 (TLGP), lysine 51, 87 to 91 (DGTTT), glycine 415, 479 to 481 (NAA), and aspartate 495. Positions 524–548 (APKDAPPTAPAGVPGAGAGGPGFDF) are disordered. Gly residues predominate over residues 537–548 (PGAGAGGPGFDF).

Belongs to the chaperonin (HSP60) family. Forms a cylinder of 14 subunits composed of two heptameric rings stacked back-to-back. Interacts with the co-chaperonin GroES.

Its subcellular location is the cytoplasm. It catalyses the reaction ATP + H2O + a folded polypeptide = ADP + phosphate + an unfolded polypeptide.. Together with its co-chaperonin GroES, plays an essential role in assisting protein folding. The GroEL-GroES system forms a nano-cage that allows encapsulation of the non-native substrate proteins and provides a physical environment optimized to promote and accelerate protein folding. This Burkholderia pseudomallei (strain 668) protein is Chaperonin GroEL 2.